Consider the following 369-residue polypeptide: DNA replication and repair protein RecF (369 aa).

30–37 (GDNGSGKT) contacts ATP.

The protein belongs to the RecF family.

The protein resides in the cytoplasm. The RecF protein is involved in DNA metabolism; it is required for DNA replication and normal SOS inducibility. RecF binds preferentially to single-stranded, linear DNA. It also seems to bind ATP. The chain is DNA replication and repair protein RecF from Pseudomonas aeruginosa (strain UCBPP-PA14).